We begin with the raw amino-acid sequence, 138 residues long: UPF0201 protein PH1010 (138 aa).

It belongs to the UPF0201 family.

The sequence is that of UPF0201 protein PH1010 from Pyrococcus horikoshii (strain ATCC 700860 / DSM 12428 / JCM 9974 / NBRC 100139 / OT-3).